Consider the following 1330-residue polypeptide: ESX-3 secretion system protein EccC3 (1330 aa).

2 helical membrane passes run 43–63 (LPYLIGILIVGMIVALVATGM) and 65–85 (VISPQTLFFPFVLLLAATALY). FtsK domains are found at residues 456-662 (GEPL…SVSR), 811-1000 (RDPL…RDSN), and 1090-1280 (LAPV…ADSG). ATP-binding positions include 479-486 (GMTGSGKS), 829-836 (GGPKSGKS), and 1107-1114 (GDARSGKT).

As to quaternary structure, part of the ESX-3 / type VII secretion system (T7SS), which is composed of cytosolic and membrane components. The ESX-3 membrane complex is composed of EccB3, EccC3, EccD3 and EccE3.

The protein resides in the cell inner membrane. Part of the ESX-3 specialized secretion system, which is important for iron and zinc uptake or homeostasis. The protein is ESX-3 secretion system protein EccC3 of Mycobacterium tuberculosis (strain ATCC 25618 / H37Rv).